Here is a 286-residue protein sequence, read N- to C-terminus: Glycine--tRNA ligase alpha subunit (286 aa).

This sequence belongs to the class-II aminoacyl-tRNA synthetase family. In terms of assembly, tetramer of two alpha and two beta subunits.

It localises to the cytoplasm. The catalysed reaction is tRNA(Gly) + glycine + ATP = glycyl-tRNA(Gly) + AMP + diphosphate. The chain is Glycine--tRNA ligase alpha subunit from Thermotoga petrophila (strain ATCC BAA-488 / DSM 13995 / JCM 10881 / RKU-1).